A 254-amino-acid polypeptide reads, in one-letter code: 5-oxoprolinase subunit A (254 aa).

This sequence belongs to the LamB/PxpA family. As to quaternary structure, forms a complex composed of PxpA, PxpB and PxpC.

It carries out the reaction 5-oxo-L-proline + ATP + 2 H2O = L-glutamate + ADP + phosphate + H(+). Its function is as follows. Catalyzes the cleavage of 5-oxoproline to form L-glutamate coupled to the hydrolysis of ATP to ADP and inorganic phosphate. The protein is 5-oxoprolinase subunit A of Heliobacterium modesticaldum (strain ATCC 51547 / Ice1).